We begin with the raw amino-acid sequence, 474 residues long: uncharacterized protein (474 aa).

An N-terminal signal peptide occupies residues M1 to G23. C24 carries the N-palmitoyl cysteine lipid modification. A lipid anchor (S-diacylglycerol cysteine) is attached at C24.

Belongs to the MG067/MG068/MG395 family.

The protein localises to the cell membrane. This is an uncharacterized protein from Mycoplasma genitalium (strain ATCC 33530 / DSM 19775 / NCTC 10195 / G37) (Mycoplasmoides genitalium).